The following is a 176-amino-acid chain: Sperm-egg fusion protein TMEM95 (176 aa).

A signal peptide spans 1–16 (MWRLALGGVFLAAAQA). Cystine bridges form between Cys-17–Cys-118, Cys-20–Cys-121, Cys-105–Cys-128, and Cys-109–Cys-134. Residues 17-145 (CVFCRLPAHD…PGSQDLWEAK (129 aa)) lie on the Extracellular side of the membrane. The chain crosses the membrane as a helical span at residues 146–166 (ILLLSIFGAFLLLGVLSLLVE). Residues 167–176 (SHHLQAKSGL) are Cytoplasmic-facing.

This sequence belongs to the TMEM95 family. In terms of assembly, does not interact with sperm-egg fusion proteins IZUMO1 or IZUMO1R/JUNO. In terms of processing, N-glycosylated. In terms of tissue distribution, spermatozoa (at protein level).

Its subcellular location is the cytoplasmic vesicle. The protein localises to the secretory vesicle. The protein resides in the acrosome membrane. In terms of biological role, sperm protein required for fusion of sperm with the egg membrane during fertilization. The protein is Sperm-egg fusion protein TMEM95 of Homo sapiens (Human).